We begin with the raw amino-acid sequence, 1661 residues long: Pentafunctional AROM polypeptide (1661 aa).

The interval 1–388 is 3-dehydroquinate synthase; it reads MATNGVKAEP…YEKKASSVVD (388 aa). NAD(+)-binding positions include 50–52, 87–90, 118–120, and D123; these read DTN, ETSK, and GGV. R134 contacts 7-phospho-2-dehydro-3-deoxy-D-arabino-heptonate. Residue 143-144 participates in NAD(+) binding; it reads TT. 2 residues coordinate 7-phospho-2-dehydro-3-deoxy-D-arabino-heptonate: D150 and K156. K165 contacts NAD(+). N166 contributes to the 7-phospho-2-dehydro-3-deoxy-D-arabino-heptonate binding site. NAD(+) contacts are provided by residues 183–186 and N194; that span reads FLET. A Zn(2+)-binding site is contributed by E198. 7-phospho-2-dehydro-3-deoxy-D-arabino-heptonate contacts are provided by residues 198 to 201 and K254; that span reads EVVK. E264 serves as the catalytic Proton acceptor; for 3-dehydroquinate synthase activity. Residues 268 to 272 and H275 contribute to the 7-phospho-2-dehydro-3-deoxy-D-arabino-heptonate site; that span reads RNLLN. H275 is a Zn(2+) binding site. H279 serves as the catalytic Proton acceptor; for 3-dehydroquinate synthase activity. 7-phospho-2-dehydro-3-deoxy-D-arabino-heptonate contacts are provided by H291 and K360. Position 291 (H291) interacts with Zn(2+). Residues 401 to 850 are EPSP synthase; that stretch reads VHPGIPSDLN…WDILNQQFKA (450 aa). The active-site For EPSP synthase activity is the C832. The interval 872-1064 is shikimate kinase; that stretch reads QKSIFIIGMR…KKKKQSFFVC (193 aa). 879–886 serves as a coordination point for ATP; sequence GMRGAGKT. The tract at residues 1065-1285 is 3-dehydroquinase; sequence LSAPNLEPCA…TAPGQLSAAD (221 aa). H1188 acts as the Proton acceptor; for 3-dehydroquinate dehydratase activity in catalysis. Catalysis depends on K1216, which acts as the Schiff-base intermediate with substrate; for 3-dehydroquinate dehydratase activity. Residues 1298–1661 form a shikimate dehydrogenase region; sequence TKKFCIFGSP…LTYSWSLGDW (364 aa).

It in the N-terminal section; belongs to the sugar phosphate cyclases superfamily. Dehydroquinate synthase family. The protein in the 2nd section; belongs to the EPSP synthase family. This sequence in the 3rd section; belongs to the shikimate kinase family. In the 4th section; belongs to the type-I 3-dehydroquinase family. It in the C-terminal section; belongs to the shikimate dehydrogenase family. In terms of assembly, homodimer. The cofactor is Zn(2+).

It localises to the cytoplasm. The catalysed reaction is 7-phospho-2-dehydro-3-deoxy-D-arabino-heptonate = 3-dehydroquinate + phosphate. It carries out the reaction 3-dehydroquinate = 3-dehydroshikimate + H2O. The enzyme catalyses shikimate + NADP(+) = 3-dehydroshikimate + NADPH + H(+). It catalyses the reaction shikimate + ATP = 3-phosphoshikimate + ADP + H(+). The catalysed reaction is 3-phosphoshikimate + phosphoenolpyruvate = 5-O-(1-carboxyvinyl)-3-phosphoshikimate + phosphate. It participates in metabolic intermediate biosynthesis; chorismate biosynthesis; chorismate from D-erythrose 4-phosphate and phosphoenolpyruvate: step 2/7. Its pathway is metabolic intermediate biosynthesis; chorismate biosynthesis; chorismate from D-erythrose 4-phosphate and phosphoenolpyruvate: step 3/7. The protein operates within metabolic intermediate biosynthesis; chorismate biosynthesis; chorismate from D-erythrose 4-phosphate and phosphoenolpyruvate: step 4/7. It functions in the pathway metabolic intermediate biosynthesis; chorismate biosynthesis; chorismate from D-erythrose 4-phosphate and phosphoenolpyruvate: step 5/7. It participates in metabolic intermediate biosynthesis; chorismate biosynthesis; chorismate from D-erythrose 4-phosphate and phosphoenolpyruvate: step 6/7. The AROM polypeptide catalyzes 5 consecutive enzymatic reactions in prechorismate polyaromatic amino acid biosynthesis. The chain is Pentafunctional AROM polypeptide from Phaeosphaeria nodorum (strain SN15 / ATCC MYA-4574 / FGSC 10173) (Glume blotch fungus).